The following is a 128-amino-acid chain: Large ribosomal subunit protein bL17 (128 aa).

Belongs to the bacterial ribosomal protein bL17 family. Part of the 50S ribosomal subunit. Contacts protein L32.

This is Large ribosomal subunit protein bL17 from Pseudomonas syringae pv. syringae (strain B728a).